A 195-amino-acid polypeptide reads, in one-letter code: N-(5'-phosphoribosyl)anthranilate isomerase (195 aa).

The protein belongs to the TrpF family.

The enzyme catalyses N-(5-phospho-beta-D-ribosyl)anthranilate = 1-(2-carboxyphenylamino)-1-deoxy-D-ribulose 5-phosphate. It functions in the pathway amino-acid biosynthesis; L-tryptophan biosynthesis; L-tryptophan from chorismate: step 3/5. This Streptococcus gordonii (strain Challis / ATCC 35105 / BCRC 15272 / CH1 / DL1 / V288) protein is N-(5'-phosphoribosyl)anthranilate isomerase.